Consider the following 299-residue polypeptide: Acetylglutamate kinase (299 aa).

Residues Gly64 to Gly65, Arg86, and Asn197 each bind substrate.

The protein belongs to the acetylglutamate kinase family. ArgB subfamily.

Its subcellular location is the cytoplasm. It catalyses the reaction N-acetyl-L-glutamate + ATP = N-acetyl-L-glutamyl 5-phosphate + ADP. Its pathway is amino-acid biosynthesis; L-arginine biosynthesis; N(2)-acetyl-L-ornithine from L-glutamate: step 2/4. In terms of biological role, catalyzes the ATP-dependent phosphorylation of N-acetyl-L-glutamate. In Sulfurihydrogenibium sp. (strain YO3AOP1), this protein is Acetylglutamate kinase.